Consider the following 1732-residue polypeptide: Transient receptor potential cation channel subfamily M member 3 (1732 aa).

Residues 1-894 lie on the Cytoplasmic side of the membrane; it reads MPEPWGTVYF…RKIYEFYNAP (894 aa). Calmodulin-binding stretches follow at residues 192–215, 300–323, 601–624, and 793–816; these read NFELQPKLKQVFGKGLIKAAMTTG, TGKYGAEVKLRRQLEKHISLQKIN, RKRFRTLYHNLFGPKRPKALKLLG, and RKNSGLKVILGILLPPSILSLEFK. The tract at residues 617 to 625 is required for the inhibitory action of G-beta/gamma-subunits of heterotrimeric G-proteins; it reads PKALKLLGM. Ser-796 contributes to the 1,2-dioctanoyl-sn-glycero-3-phospho-(1D-myo-inositol-4,5-bisphosphate) binding site. The chain crosses the membrane as a helical span at residues 895–918; the sequence is IVKFWFYTLAYIGYLMLFNYIVLV. Residues 919–925 are Extracellular-facing; it reads KMERWPS. The helical transmembrane segment at 926–948 threads the bilayer; sequence TQEWIVISYIFTLGIEKMREILM. At 949 to 964 the chain is on the cytoplasmic side; the sequence is SEPGKLLQKVKVWLQE. Residues 965–985 traverse the membrane as a helical segment; it reads YWNVTDLIAILLFSVGMILRL. Topologically, residues 986–989 are extracellular; sequence QDQP. The chain crosses the membrane as a helical span at residues 990–1013; the sequence is FRSDGRVIYCVNIIYWYIRLLDIF. Over 1014–1028 the chain is Cytoplasmic; that stretch reads GVNKYLGPYVMMIGK. 2 residues coordinate 1,2-dioctanoyl-sn-glycero-3-phospho-(1D-myo-inositol-4,5-bisphosphate): Lys-1017 and Tyr-1018. Residues 1029 to 1056 traverse the membrane as a helical segment; that stretch reads MMIDMMYFVIIMLVVLMSFGVARQAILF. Topologically, residues 1057–1111 are extracellular; the sequence is PNEEPSWKLAKNIFYMPYWMIYGEVFADQIDPPCGQNETREDGKIIQLPPCKTGA. A helical transmembrane segment spans residues 1112-1137; it reads WIVPAIMACYLLVANILLVNLLIAVF. Topologically, residues 1138-1732 are cytoplasmic; it reads NNTFFEVKSI…AFQSFESKHN (595 aa). A coiled-coil region spans residues 1241–1301; that stretch reads ERIRVTSERV…LERLTGLERA (61 aa). A compositionally biased stretch (low complexity) spans 1459–1476; it reads PVPSTAPSSSAYATLAPT. Disordered stretches follow at residues 1459–1478 and 1611–1732; these read PVPSTAPSSSAYATLAPTDR and REAE…SKHN. Composition is skewed to polar residues over residues 1635–1653, 1690–1701, and 1720–1732; these read AISSQEGDNSERTLSNNIT, NTASLRNPFQRS, and RTSAFQSFESKHN.

Belongs to the transient receptor (TC 1.A.4) family. LTrpC subfamily. TRPM3 sub-subfamily. Homotetramer. Interacts with TRPM1; the interaction results in the formation of a heteromultimeric cation channel complex that are functionally different from the homomeric channels. In terms of tissue distribution, expressed primarily in the kidney and, at lower levels, in brain, testis, ovary, pancreas and spinal cord. Expression in the brain and kidney was determined at protein level. In the kidney, expressed predominantly in the collecting tubular epithelium in the medulla, medullary rays, and periglomerular regions; in the brain, highest levels are found in the cerebellum, choroid plexus, the locus coeruleus, the posterior thalamus and the substantia nigra. Down-regulated in renal tumors compared to normal kidney. Expressed in the lens.

The protein resides in the cell membrane. The enzyme catalyses Ca(2+)(in) = Ca(2+)(out). The catalysed reaction is Mn(2+)(in) = Mn(2+)(out). It catalyses the reaction Zn(2+)(in) = Zn(2+)(out). It carries out the reaction Mg(2+)(in) = Mg(2+)(out). Its activity is regulated as follows. Activated by the neurosteroid pregnelonone sulfate (PregS); PregS activates the channel by shifting its current-voltage activation curve toward more negative membrane potentials and also potentiates temperature-induced activation. Activated by sphingosine. Activated by heat. Intracellular Ca(2+) inhibits TRPM3 probably via interaction with Ca(2+)/calmodulin. Intracellular Mg(2+) inhibits TRPM3 activity. Both intracellular and extracellular protons block TRPM3 through propable binding sites in the pore region. Positively regulated by phosphoinositide phosphoinositol 4,5-biphosphate (PI(4,5)P2). Strongly inhibited by activation of G(i)-coupled receptors via direct binding with G-betagamma-subunits of heterotrimeric G-proteins. In terms of biological role, constitutively active, non-selective divalent cation-conducting channel that is permeable to Ca(2+), Mn(2+), and Mg(2+), with a high permeability for Ca(2+). However, can be enhanced by increasing temperature and by ligands, including the endogenous neurosteroid pregnenolone sulfate and sphingosine-1 and suppressed by intracellular Mg(2+). Implicated in a variety of cellular processes, including insulin/peptide secretion, vascular constriction and dilation, noxious heat sensing, inflammatory and spontaneous pain sensitivity. In neurons of the dorsal root ganglia, functions as thermosensitive channel for the detection of noxious heat and spontaneous pain. Suggested to function as an ionotropic steroid receptor in beta-cell, indeed pregnenolone sulfate leads to Ca(2+) influx and enhanced insulin secretion. Mediates Zn(2+) uptake into the lumen of pancreatic beta cell secretory granules, thereby regulating insulin secretion. Forms heteromultimeric ion channels with TRPM1 which are permeable for Ca(2+) and Zn(2+) ions. Exists as multiple splice variants which differ significantly in their biophysical properties. The polypeptide is Transient receptor potential cation channel subfamily M member 3 (Homo sapiens (Human)).